Consider the following 193-residue polypeptide: tRNA(Phe) 7-((3-amino-3-carboxypropyl)-4-demethylwyosine(37)-N(4))-methyltransferase (193 aa).

The protein belongs to the TYW3 family.

The catalysed reaction is 4-demethyl-7-[(3S)-3-amino-3-carboxypropyl]wyosine(37) in tRNA(Phe) + S-adenosyl-L-methionine = 7-[(3S)-3-amino-3-carboxypropyl]wyosine(37) in tRNA(Phe) + S-adenosyl-L-homocysteine + H(+). Functionally, S-adenosyl-L-methionine-dependent methyltransferase that acts as a component of the wyosine derivatives biosynthesis pathway. Probably methylates N-4 position of wybutosine-86 to produce wybutosine-72. This Methanocaldococcus jannaschii (strain ATCC 43067 / DSM 2661 / JAL-1 / JCM 10045 / NBRC 100440) (Methanococcus jannaschii) protein is tRNA(Phe) 7-((3-amino-3-carboxypropyl)-4-demethylwyosine(37)-N(4))-methyltransferase.